Consider the following 248-residue polypeptide: Large ribosomal subunit protein uL4 (248 aa).

2 disordered regions span residues 72-103 and 173-210; these read RSEN…KSLN and GRSV…RNLS. Residues 92–103 are compositionally biased toward basic and acidic residues; the sequence is PKAEKDQTKSLN. Basic residues predominate over residues 177–189; that stretch reads RAGRGKTRGRKYS.

It belongs to the universal ribosomal protein uL4 family. Part of the 50S ribosomal subunit.

Functionally, one of the primary rRNA binding proteins, this protein initially binds near the 5'-end of the 23S rRNA. It is important during the early stages of 50S assembly. It makes multiple contacts with different domains of the 23S rRNA in the assembled 50S subunit and ribosome. Its function is as follows. Forms part of the polypeptide exit tunnel. The sequence is that of Large ribosomal subunit protein uL4 from Halorubrum lacusprofundi (strain ATCC 49239 / DSM 5036 / JCM 8891 / ACAM 34).